We begin with the raw amino-acid sequence, 92 residues long: MIPANFGGTELIILLVIILLLFGAKRIPELARGLGTGVREFRKGTSGAYEELEEKKGEEEKDEGGKKEAEASGRGEEEQQARAAGEAGRKQG.

A helical membrane pass occupies residues 2–22; that stretch reads IPANFGGTELIILLVIILLLF. The interval 43–92 is disordered; that stretch reads KGTSGAYEELEEKKGEEEKDEGGKKEAEASGRGEEEQQARAAGEAGRKQG. Over residues 53–80 the composition is skewed to basic and acidic residues; the sequence is EEKKGEEEKDEGGKKEAEASGRGEEEQQ.

This sequence belongs to the TatA/E family. The Tat system comprises two distinct complexes: a TatABC complex, containing multiple copies of TatA, TatB and TatC subunits, and a separate TatA complex, containing only TatA subunits. Substrates initially bind to the TatABC complex, which probably triggers association of the separate TatA complex to form the active translocon.

The protein resides in the cell membrane. In terms of biological role, part of the twin-arginine translocation (Tat) system that transports large folded proteins containing a characteristic twin-arginine motif in their signal peptide across membranes. TatA could form the protein-conducting channel of the Tat system. The protein is Sec-independent protein translocase protein TatA of Rubrobacter xylanophilus (strain DSM 9941 / JCM 11954 / NBRC 16129 / PRD-1).